Reading from the N-terminus, the 520-residue chain is Bifunctional dihydrofolate reductase-thymidylate synthase (520 aa).

The 204-residue stretch at 26-229 (AFSIVVALDK…LEFEICKYVP (204 aa)) folds into the DHFR domain. Val-30 provides a ligand contact to substrate. Residues Ala-32 and 38–44 (GIGDGES) each bind NADP(+). Asp-52 is a substrate binding site. NADP(+) is bound by residues 81 to 83 (RKT), 102 to 105 (LSSK), and 157 to 164 (GGAQVYAD). Residues Tyr-162 and Thr-180 each coordinate substrate. A thymidylate synthase region spans residues 234–520 (ERQYLELIDR…HPPIKMEMAV (287 aa)). Arg-254 contributes to the dUMP binding site. Cys-400 is an active-site residue. Residues His-401, 421 to 425 (QRSCD), Asn-433, and 463 to 465 (HVY) each bind dUMP.

The protein in the N-terminal section; belongs to the dihydrofolate reductase family. In the C-terminal section; belongs to the thymidylate synthase family.

The catalysed reaction is (6S)-5,6,7,8-tetrahydrofolate + NADP(+) = 7,8-dihydrofolate + NADPH + H(+). It catalyses the reaction dUMP + (6R)-5,10-methylene-5,6,7,8-tetrahydrofolate = 7,8-dihydrofolate + dTMP. Its pathway is cofactor biosynthesis; tetrahydrofolate biosynthesis; 5,6,7,8-tetrahydrofolate from 7,8-dihydrofolate: step 1/1. In terms of biological role, bifunctional enzyme. Involved in de novo dTMP biosynthesis. Key enzyme in folate metabolism. Catalyzes an essential reaction for de novo glycine and purine synthesis, DNA precursor synthesis, and for the conversion of dUMP to dTMP. This is Bifunctional dihydrofolate reductase-thymidylate synthase from Leishmania amazonensis.